A 529-amino-acid chain; its full sequence is Bifunctional purine biosynthesis protein PurH (529 aa).

An MGS-like domain is found at 1–148 (MNNARPIRRA…KNHKDVVIVV (148 aa)).

This sequence belongs to the PurH family.

It catalyses the reaction (6R)-10-formyltetrahydrofolate + 5-amino-1-(5-phospho-beta-D-ribosyl)imidazole-4-carboxamide = 5-formamido-1-(5-phospho-D-ribosyl)imidazole-4-carboxamide + (6S)-5,6,7,8-tetrahydrofolate. The catalysed reaction is IMP + H2O = 5-formamido-1-(5-phospho-D-ribosyl)imidazole-4-carboxamide. It participates in purine metabolism; IMP biosynthesis via de novo pathway; 5-formamido-1-(5-phospho-D-ribosyl)imidazole-4-carboxamide from 5-amino-1-(5-phospho-D-ribosyl)imidazole-4-carboxamide (10-formyl THF route): step 1/1. The protein operates within purine metabolism; IMP biosynthesis via de novo pathway; IMP from 5-formamido-1-(5-phospho-D-ribosyl)imidazole-4-carboxamide: step 1/1. In Shewanella amazonensis (strain ATCC BAA-1098 / SB2B), this protein is Bifunctional purine biosynthesis protein PurH.